The chain runs to 393 residues: MANDFLFTSESVSEGHPDKVADQISDAILDAIFEQDPRSRVAAETLTNTGLVVLAGEITTNAHVDYIQVARDTIKRIGYDNTEYGIDYKGCAVLVAYDKQSNDIAQGVDHASDDHLNTGAGDQGLMFGYACDETPELMPAPIYYAHRLVERQAQLRKDGRLPFLRPDAKSQVTMRYVDGKPHSIDTIVLSTQHSPEQSLGDKMIPSFYEAIREELIKPVLPKEWITAETQYLINPTGRFVIGGPQGDCGLTGRKIIVDTYGGACPHGGGAFSGKDPTKVDRSAAYAARYVAKNIVAAGLARQCQIQVAYAIGVARPMNITVYTEGTGVIPDAEIAKLVEAHFDLRPKGIIQMLDLLRPIYQKTAAYGHFGREEPEFTWERTDKAQVLRAAAGL.

His-16 lines the ATP pocket. Asp-18 lines the Mg(2+) pocket. A K(+)-binding site is contributed by Glu-44. 2 residues coordinate L-methionine: Glu-57 and Gln-100. The segment at 100–110 is flexible loop; it reads QSNDIAQGVDH. Residues 167–169, 238–239, Asp-247, 253–254, Ala-270, and Lys-274 contribute to the ATP site; these read DAK, RF, and RK. Asp-247 lines the L-methionine pocket. Lys-278 contacts L-methionine.

Belongs to the AdoMet synthase family. Homotetramer; dimer of dimers. Requires Mg(2+) as cofactor. K(+) is required as a cofactor.

The protein localises to the cytoplasm. The catalysed reaction is L-methionine + ATP + H2O = S-adenosyl-L-methionine + phosphate + diphosphate. It functions in the pathway amino-acid biosynthesis; S-adenosyl-L-methionine biosynthesis; S-adenosyl-L-methionine from L-methionine: step 1/1. Catalyzes the formation of S-adenosylmethionine (AdoMet) from methionine and ATP. The overall synthetic reaction is composed of two sequential steps, AdoMet formation and the subsequent tripolyphosphate hydrolysis which occurs prior to release of AdoMet from the enzyme. In Leptothrix cholodnii (strain ATCC 51168 / LMG 8142 / SP-6) (Leptothrix discophora (strain SP-6)), this protein is S-adenosylmethionine synthase.